The following is a 100-amino-acid chain: Acylphosphatase (100 aa).

Residues 14 to 100 (RLSAWVHGHV…RGDLTGFEER (87 aa)) enclose the Acylphosphatase-like domain. Active-site residues include R29 and N47.

The protein belongs to the acylphosphatase family.

The enzyme catalyses an acyl phosphate + H2O = a carboxylate + phosphate + H(+). This chain is Acylphosphatase (acyP), found in Nocardia farcinica (strain IFM 10152).